The sequence spans 244 residues: Protein-lysine methyltransferase METTL21E (244 aa).

The segment at 1-20 (MDLTVTHITHKETYKEPRDD) is disordered. Residues 9-18 (THKETYKEPR) are compositionally biased toward basic and acidic residues. Residues Trp69, 97–99 (GAG), Asp118, Trp149, and Ala170 contribute to the S-adenosyl-L-methionine site.

It belongs to the methyltransferase superfamily. METTL21 family.

In terms of biological role, protein-lysine methyltransferase. The protein is Protein-lysine methyltransferase METTL21E (Mettl21e) of Mus musculus (Mouse).